The sequence spans 186 residues: Lipoprotein signal peptidase (186 aa).

4 helical membrane passes run 8 to 28 (FFSVFKPGYLAFVAFGLFLDL), 44 to 64 (IPVLGDFFRLSLTFNTGFVFG), 66 to 86 (FQDNALPSLFATGFAIVFLIF), and 97 to 117 (AWGWNFVMAGAFGNFLDKFFV). Active-site residues include D142 and D164. Residues 157–177 (WPAFNVADSCVSIGIVILLFT) form a helical membrane-spanning segment.

Belongs to the peptidase A8 family.

Its subcellular location is the cell inner membrane. The enzyme catalyses Release of signal peptides from bacterial membrane prolipoproteins. Hydrolyzes -Xaa-Yaa-Zaa-|-(S,diacylglyceryl)Cys-, in which Xaa is hydrophobic (preferably Leu), and Yaa (Ala or Ser) and Zaa (Gly or Ala) have small, neutral side chains.. It functions in the pathway protein modification; lipoprotein biosynthesis (signal peptide cleavage). This protein specifically catalyzes the removal of signal peptides from prolipoproteins. The polypeptide is Lipoprotein signal peptidase (Leptospira biflexa serovar Patoc (strain Patoc 1 / ATCC 23582 / Paris)).